We begin with the raw amino-acid sequence, 116 residues long: Large ribosomal subunit protein uL18 (116 aa).

Belongs to the universal ribosomal protein uL18 family. As to quaternary structure, part of the 50S ribosomal subunit; part of the 5S rRNA/L5/L18/L25 subcomplex. Contacts the 5S and 23S rRNAs.

This is one of the proteins that bind and probably mediate the attachment of the 5S RNA into the large ribosomal subunit, where it forms part of the central protuberance. This Pseudomonas syringae pv. tomato (strain ATCC BAA-871 / DC3000) protein is Large ribosomal subunit protein uL18.